Here is a 63-residue protein sequence, read N- to C-terminus: Large ribosomal subunit protein uL30 (63 aa).

Belongs to the universal ribosomal protein uL30 family. In terms of assembly, part of the 50S ribosomal subunit.

This chain is Large ribosomal subunit protein uL30, found in Rhodospirillum rubrum (strain ATCC 11170 / ATH 1.1.1 / DSM 467 / LMG 4362 / NCIMB 8255 / S1).